A 1066-amino-acid polypeptide reads, in one-letter code: Glucose transport transcription regulator RGT1 (1066 aa).

Polar residues-rich tracts occupy residues 1 to 11 and 42 to 57; these read MTPMSENNGSE and VESQ…NTSA. Disordered regions lie at residues 1–70, 108–153, 214–285, 298–399, 616–645, and 849–871; these read MTPM…ACDQ, PSKG…VLLP, YASP…QQQY, GANG…EYPL, DATK…NDSR, and MEHD…ESGK. A DNA-binding region (zn(2)-C6 fungal-type) is located at residues 68–97; it reads CDQCRKRKIRCDYDDDKGVCTSCRKNGESC. 4 stretches are compositionally biased toward polar residues: residues 118–131, 139–148, 260–270, and 314–327; these read VSRS…NTAA, EFSSPSSRQG, GSNPPSLKNVS, and MSPS…SVPM. Composition is skewed to low complexity over residues 328–350 and 622–641; these read NQSN…KVQP and SNDN…NNDN. Polar residues predominate over residues 855–871; it reads GNSASRKFTTSQAESGK.

It belongs to the EDS1/RGT1 family.

It is found in the nucleus. Its subcellular location is the cytoplasm. Its function is as follows. Glucose-responsive transcription factor that regulates expression of several glucose transporter (HXT) genes in response to glucose. In the absence of glucose, it functions as a transcriptional repressor, whereas high concentrations of glucose cause it to function as a transcriptional activator. In cells growing on low levels of glucose, has a neutral role, neither repressing nor activating transcription. The sequence is that of Glucose transport transcription regulator RGT1 (RGT1) from Zygosaccharomyces rouxii (strain ATCC 2623 / CBS 732 / NBRC 1130 / NCYC 568 / NRRL Y-229).